Here is a 389-residue protein sequence, read N- to C-terminus: Zinc finger C2HC domain-containing protein 1C homolog (389 aa).

Disordered stretches follow at residues 16–44 (MLPH…SQQS) and 84–115 (SYPH…GPQS). 2 stretches are compositionally biased toward polar residues: residues 35-44 (YEQGDSSQQS) and 90-102 (GISQ…DSQG). A coiled-coil region spans residues 211–266 (VQIRRLEAAGESLEEEIRRKQILLRGKLKKTEEELRRIQMQKEQAKENENRELQKI). Disordered regions lie at residues 301-320 (REDE…QLSD) and 343-389 (SELS…PQLG). A compositionally biased stretch (polar residues) spans 307–317 (GRSQQNSSPFQ). The span at 368 to 382 (SSLSMAPDSSGSSGS) shows a compositional bias: low complexity.

This sequence belongs to the ZC2HC1 family.

The protein is Zinc finger C2HC domain-containing protein 1C homolog (ZC2HC1C) of Pongo abelii (Sumatran orangutan).